The following is a 974-amino-acid chain: Short transient receptor potential channel 4 (974 aa).

Residues 1-324 (MAQFYYKRNV…YDEFPGWRRR (324 aa)) lie on the Cytoplasmic side of the membrane. ANK repeat units follow at residues 29–60 (LSPS…IYFK), 71–93 (RTAL…LSFN), 96–118 (VGDA…LLNH), and 141–165 (PDIT…VQKG). Positions 87–172 (ELLLSFNVYV…QKGVSVPRPH (86 aa)) are multimerization domain. Zn(2+)-binding residues include His-172, Cys-176, Cys-178, and Cys-181. Positions 223–260 (LSWELQELSKVENEFKSEYEELSRQCKQFAKDLLDQTR) form a coiled coil. A multimerization domain region spans residues 254-304 (DLLDQTRSSRELEIILNYRDDNSLIEEQSGNDLARLKLAIKYRQKEFVAQP). Positions 325–359 (HWAVKMVTCFIIGLLFPVFSVCYLIAPKSPLGLFI) form an intramembrane region, discontinuously helical. The Cytoplasmic segment spans residues 360–362 (RKP). The chain crosses the membrane as a helical span at residues 363-383 (FIKFICHTASYLTFLFLLLLA). Over 384–403 (SQHIDRSDLNRQGPPPTIVE) the chain is Extracellular. Residues 404–418 (WMILPWVLGFIWGEI) traverse the membrane as a helical segment. Residues Glu-417, Gln-420, Asn-435, and Asp-438 each coordinate Ca(2+). At 419 to 432 (KQMWDGGLQDYIHD) the chain is on the cytoplasmic side. A helical membrane pass occupies residues 433–453 (WWNLMDFVMNSLYLATISLKI). The Extracellular segment spans residues 454–475 (VAFVKYSALNPRESWDMWHPTL). Residues 476–498 (VAEALFAIANIFSSLRLISLFTA) traverse the membrane as a helical segment. The Cytoplasmic portion of the chain corresponds to 499–511 (NSHLGPLQISLGR). A helical membrane pass occupies residues 512–534 (MLLDILKFLFIYCLVLLAFANGL). At 535 to 599 (NQLYFYYEET…HEFTEFVGAT (65 aa)) the chain is on the extracellular side. Cys-549 and Cys-554 are disulfide-bonded. The chain crosses the membrane as a helical span at residues 600–620 (MFGTYNVISLVVLLNMLIAMM). The interaction with ITPR1, ITPR2 and ITPR3 stretch occupies residues 615–974 (MLIAMMNNSY…AHEDYVTTRL (360 aa)). The Cytoplasmic segment spans residues 621–974 (NNSYQLIADH…AHEDYVTTRL (354 aa)). The disordered stretch occupies residues 765 to 787 (ANAASSADSDEKSQSEGNGKDKR). A compositionally biased stretch (basic and acidic residues) spans 773–784 (SDEKSQSEGNGK). Phosphotyrosine; by FYN is present on residues Tyr-956 and Tyr-969. A PDZ-binding domain region spans residues 972–974 (TRL).

This sequence belongs to the transient receptor (TC 1.A.4) family. STrpC subfamily. TRPC4 sub-subfamily. In terms of assembly, homotetramer. Heterotetramer with TRPC1 and/or TRPC5. Forms a heteromeric ion channel with TRPC1, with a 1:3 TRPC1:TRPC4 stoichiometry. Interacts with TRPC4AP. Isoform alpha but not isoform beta interacts with ITPR1, ITPR2 and ITPR3. Interacts with NHERF1. Interacts with MX1 and RNF24. Interacts (via CIRB domain) with SESTD1 (via the spectrin 1 repeat) and SPTBN5 (via C-terminus). Interacts with CDH5 and CTNNB1. Interacts (via protein 4.1-binding domain) with EPB41L2. Interacts with PLSCR1. Abundantly expressed in brain (hippocampal CA1 pyramidal neurons, dentate gyrus granule cells, and cerebral cortical neurons, and in the septal nuclei and the mitral layer of olfactory bulb). Lower levels are detected in other tissues.

It is found in the cell membrane. It catalyses the reaction Ca(2+)(in) = Ca(2+)(out). The catalysed reaction is Na(+)(in) = Na(+)(out). The enzyme catalyses Li(+)(in) = Li(+)(out). It carries out the reaction Cs(+)(in) = Cs(+)(out). With respect to regulation, may be operated by a phosphatidylinositol second messenger system activated by receptor tyrosine kinases or G-protein coupled receptors. May be activated by intracellular calcium store depletion. Forms a receptor-activated non-selective calcium permeant cation channel. Acts as a cell-cell contact-dependent endothelial calcium entry channel. Forms a homomeric ion channel or a heteromeric ion channel with TRPC1; the heteromeric ion channel has reduced calcium permeability compared to the homomeric channel. Also permeable to monovalent ions including sodium, lithium and cesium ions. The protein is Short transient receptor potential channel 4 (Trpc4) of Mus musculus (Mouse).